Here is a 124-residue protein sequence, read N- to C-terminus: Small ribosomal subunit protein uS12 (124 aa).

Asp89 is subject to 3-methylthioaspartic acid.

Belongs to the universal ribosomal protein uS12 family. As to quaternary structure, part of the 30S ribosomal subunit. Contacts proteins S8 and S17. May interact with IF1 in the 30S initiation complex.

With S4 and S5 plays an important role in translational accuracy. In terms of biological role, interacts with and stabilizes bases of the 16S rRNA that are involved in tRNA selection in the A site and with the mRNA backbone. Located at the interface of the 30S and 50S subunits, it traverses the body of the 30S subunit contacting proteins on the other side and probably holding the rRNA structure together. The combined cluster of proteins S8, S12 and S17 appears to hold together the shoulder and platform of the 30S subunit. The protein is Small ribosomal subunit protein uS12 of Baumannia cicadellinicola subsp. Homalodisca coagulata.